The chain runs to 330 residues: o-succinylbenzoate synthase (330 aa).

Catalysis depends on lysine 130, which acts as the Proton donor. Residues aspartate 155, glutamate 184, and aspartate 206 each coordinate Mg(2+). Catalysis depends on lysine 228, which acts as the Proton acceptor.

The protein belongs to the mandelate racemase/muconate lactonizing enzyme family. MenC type 1 subfamily. In terms of assembly, monomer. A divalent metal cation serves as cofactor.

It carries out the reaction (1R,6R)-6-hydroxy-2-succinyl-cyclohexa-2,4-diene-1-carboxylate = 2-succinylbenzoate + H2O. Its pathway is quinol/quinone metabolism; 1,4-dihydroxy-2-naphthoate biosynthesis; 1,4-dihydroxy-2-naphthoate from chorismate: step 4/7. The protein operates within cofactor biosynthesis; phylloquinone biosynthesis. In terms of biological role, converts 2-succinyl-6-hydroxy-2,4-cyclohexadiene-1-carboxylate (SHCHC) to 2-succinylbenzoate (OSB). Does not show N-succinylamino acid racemase (NSAR) activity with N-succinyl-L-phenylglycine as substrate. In Bdellovibrio bacteriovorus (strain ATCC 15356 / DSM 50701 / NCIMB 9529 / HD100), this protein is o-succinylbenzoate synthase.